We begin with the raw amino-acid sequence, 29 residues long: GLPVCGETCAFGSCYTPGCSCSWPVCTRN.

The cyclopeptide (Gly-Asn) cross-link spans 1 to 29 (GLPVCGETCAFGSCYTPGCSCSWPVCTRN). Disulfide bonds link Cys5/Cys19, Cys9/Cys21, and Cys14/Cys26.

Post-translationally, this is a cyclic peptide.

Its function is as follows. Probably participates in a plant defense mechanism. The polypeptide is Cyclotide vibi-C (Viola biflora (Yellow wood violet)).